The following is a 496-amino-acid chain: Sodium/sialic acid symporter SiaT (496 aa).

The Periplasmic segment spans residues 1 to 7; that stretch reads MQLHDFG. A helical transmembrane segment spans residues 8-29; that stretch reads FINYAVLFGYLAAMLLVGVYFS. Topologically, residues 30-46 are cytoplasmic; that stretch reads KRQKTADDYFRGGGRVP. Residues 47–59 form a helical membrane-spanning segment; the sequence is GWAAGVSVFATTL. Ala56 provides a ligand contact to Na(+). Residue Thr58 coordinates N-acetyl-alpha-neuraminate. Leu59 serves as a coordination point for Na(+). The N-acetyl-alpha-neuraminate site is built by Ser60, Thr63, and Gln82. Residues 60–76 are Periplasmic-facing; the sequence is SSITFMSIPAKAYTSDW. Residues 77-92 traverse the membrane as a helical segment; that stretch reads TFIIGQYLAIAILPLV. The Cytoplasmic portion of the chain corresponds to 93-116; that stretch reads FYFYIPFFRKLKITSAYEYLEARF. Residues 117–144 form a helical membrane-spanning segment; that stretch reads DVRSRLFASLSFMLFHIGRVAIITYLTV. Arg135 is a binding site for N-acetyl-alpha-neuraminate. The Periplasmic segment spans residues 145–154; it reads LALRPFMGID. Residues 155–172 form a helical membrane-spanning segment; sequence PVVLIVLISLLCIIYTWM. Topologically, residues 173 to 174 are cytoplasmic; it reads GG. Residues 175 to 199 traverse the membrane as a helical segment; the sequence is IEGVIWTDVIQGLLLSGGAVLIFIM. Asp182 is a Na(+) binding site. At 200–235 the chain is on the periplasmic side; it reads ICFKVDGGISEIFTTTAQADKFFPTTQWRWSWTDST. The helical transmembrane segment at 236-252 threads the bilayer; sequence IPVLMIGFLFANIQQFT. The Cytoplasmic portion of the chain corresponds to 253–272; it reads ASQDVVQRYIVTDSIKETKR. A helical membrane pass occupies residues 273–292; it reads TLITNAKLVAIIPIFFFAIG. Topologically, residues 293–325 are periplasmic; it reads SALFVYYQQNPSLLPAGFNTGGILPLFIVTEMP. A helical membrane pass occupies residues 326 to 356; it reads IGIAGLIIAAIFAAAQSSISSSLNSISSCFN. 5 residues coordinate Na(+): Ala339, Ser342, Ser343, Ser345, and Ser346. Over 357–374 the chain is Cytoplasmic; that stretch reads SDIYTRLSKSSPSPEQKM. Residues 375–396 traverse the membrane as a helical segment; it reads KVAKLVIIVAGIFSSLAAIWLV. The Periplasmic portion of the chain corresponds to 397-403; it reads LSDEAEI. A helical membrane pass occupies residues 404–427; that stretch reads WDAFNSLIGLMGGPMTGLFMLGIF. At 428–432 the chain is on the cytoplasmic side; that stretch reads VKRAN. A helical membrane pass occupies residues 433–453; it reads AGSAVVGIIVSIIAVLAARYG. Residues 454–457 lie on the Periplasmic side of the membrane; that stretch reads SDLN. Residues 458–479 form a helical membrane-spanning segment; that stretch reads FFFYGVIGSMSVVIAGTITAPL. The Cytoplasmic segment spans residues 480–496; it reads FAPAKQLSLDDSETSEN.

It belongs to the sodium:solute symporter (SSF) (TC 2.A.21) family.

It is found in the cell inner membrane. It catalyses the reaction N-acetyl-alpha-neuraminate(out) + 2 Na(+)(out) = N-acetyl-alpha-neuraminate(in) + 2 Na(+)(in). Both Na(+) sites regulate Neu5Ac transport. The binding energy of the second Na(+) ion may be used to allosterically stabilize the substrate without directly coordinating it. In the absence of external Na(+), the rate is reduced by 78%. Symporter that uses the Na(+) gradient as the driving force for the uptake of the sialic acid N-acetylneuraminic acid (Neu5Ac). It allows the use of host-derived Neu5Ac as an energy source by P.mirabilis. Also binds N-glycolylneuraminic acid (Neu5Gc) and ketodeoxynonulosonic acid (KDN). Shows the highest affinity for Neu5Ac and Neu5Gc, which commonly occupy the terminal non-reducing position of mammalian cell surface glycoconjugates. This Proteus mirabilis (strain HI4320) protein is Sodium/sialic acid symporter SiaT.